The primary structure comprises 580 residues: Acyl-coenzyme A synthetase ACSM3, mitochondrial (580 aa).

The transit peptide at 1-21 (MAMLLRARCFHRLAIPDPRRI) directs the protein to the mitochondrion. An N6-succinyllysine mark is found at Lys-67 and Lys-100. At Lys-151 the chain carries N6-acetyllysine. Residues 229–237 (TSGTTGPPK), 368–373 (EGYGQT), Asp-455, Arg-470, and Lys-566 contribute to the ATP site.

The protein belongs to the ATP-dependent AMP-binding enzyme family. Requires Mg(2+) as cofactor. Mn(2+) is required as a cofactor.

The protein resides in the mitochondrion. It is found in the mitochondrion matrix. It carries out the reaction a medium-chain fatty acid + ATP + CoA = a medium-chain fatty acyl-CoA + AMP + diphosphate. The catalysed reaction is propanoate + ATP + CoA = propanoyl-CoA + AMP + diphosphate. It catalyses the reaction butanoate + ATP + CoA = butanoyl-CoA + AMP + diphosphate. The enzyme catalyses 2-methylpropanoate + ATP + CoA = 2-methylpropanoyl-CoA + AMP + diphosphate. It carries out the reaction 2-methylbutanoate + ATP + CoA = 2-methylbutanoyl-CoA + AMP + diphosphate. The catalysed reaction is octanoate + ATP + CoA = octanoyl-CoA + AMP + diphosphate. Functionally, catalyzes the activation of fatty acids by CoA to produce an acyl-CoA, the first step in fatty acid metabolism. Capable of activating medium-chain fatty acids with a preference for isobutyrate among fatty acids with 2-6 carbon atoms. The sequence is that of Acyl-coenzyme A synthetase ACSM3, mitochondrial (Acsm3) from Rattus norvegicus (Rat).